A 263-amino-acid chain; its full sequence is Methylesterase 2 (263 aa).

The active-site Acyl-ester intermediate is the Ser85. Active-site charge relay system residues include Asp213 and His241.

Belongs to the AB hydrolase superfamily. Methylesterase family.

It carries out the reaction methyl (indol-3-yl)acetate + H2O = (indol-3-yl)acetate + methanol + H(+). The enzyme catalyses methyl (-)-jasmonate + H2O = jasmonate + methanol + H(+). It catalyses the reaction methyl salicylate + H2O = salicylate + methanol + H(+). It participates in plant hormone biosynthesis. It functions in the pathway lipid metabolism; oxylipin biosynthesis. Esterase activity is down-regulated by salicylic acid (SA). Down-regulated by agrochemicals Paraoxon, 3,4-DCl and Profenofos. Functionally, methylesterase shown to have carboxylesterase activity, methyl indole-3-acetic acid (MeIAA) esterase activity, methyl salicylate (MeSA) esterase activity and methyl jasmonate (MeJA) esterase activity in vitro. This chain is Methylesterase 2, found in Arabidopsis thaliana (Mouse-ear cress).